Here is a 549-residue protein sequence, read N- to C-terminus: Glucose-6-phosphate isomerase (549 aa).

An N6-acetyllysine mark is found at K80, K228, and K234. E355 functions as the Proton donor in the catalytic mechanism. Catalysis depends on residues H386 and K514.

Belongs to the GPI family.

It localises to the cytoplasm. The enzyme catalyses alpha-D-glucose 6-phosphate = beta-D-fructose 6-phosphate. The protein operates within carbohydrate biosynthesis; gluconeogenesis. It participates in carbohydrate degradation; glycolysis; D-glyceraldehyde 3-phosphate and glycerone phosphate from D-glucose: step 2/4. Catalyzes the reversible isomerization of glucose-6-phosphate to fructose-6-phosphate. This Escherichia coli O127:H6 (strain E2348/69 / EPEC) protein is Glucose-6-phosphate isomerase.